A 342-amino-acid chain; its full sequence is Oxygen-dependent coproporphyrinogen-III oxidase (342 aa).

Ser-98 lines the substrate pocket. A divalent metal cation contacts are provided by His-102 and His-112. His-112 serves as the catalytic Proton donor. 114–116 is a substrate binding site; sequence NYR. A divalent metal cation-binding residues include His-146 and His-176. An important for dimerization region spans residues 266-301; sequence YVEFNLVWDRGTIFGLQTNGRTESILMSLPPLARWE.

Belongs to the aerobic coproporphyrinogen-III oxidase family. As to quaternary structure, homodimer. A divalent metal cation serves as cofactor.

It is found in the cytoplasm. It carries out the reaction coproporphyrinogen III + O2 + 2 H(+) = protoporphyrinogen IX + 2 CO2 + 2 H2O. It functions in the pathway porphyrin-containing compound metabolism; protoporphyrin-IX biosynthesis; protoporphyrinogen-IX from coproporphyrinogen-III (O2 route): step 1/1. Its function is as follows. Involved in the heme and chlorophyll biosynthesis. Catalyzes the aerobic oxidative decarboxylation of propionate groups of rings A and B of coproporphyrinogen-III to yield the vinyl groups in protoporphyrinogen-IX. This chain is Oxygen-dependent coproporphyrinogen-III oxidase, found in Prochlorococcus marinus (strain MIT 9301).